Here is a 471-residue protein sequence, read N- to C-terminus: 3-isopropylmalate dehydratase large subunit (471 aa).

Cys349, Cys409, and Cys412 together coordinate [4Fe-4S] cluster.

This sequence belongs to the aconitase/IPM isomerase family. LeuC type 1 subfamily. In terms of assembly, heterodimer of LeuC and LeuD. [4Fe-4S] cluster serves as cofactor.

The enzyme catalyses (2R,3S)-3-isopropylmalate = (2S)-2-isopropylmalate. It functions in the pathway amino-acid biosynthesis; L-leucine biosynthesis; L-leucine from 3-methyl-2-oxobutanoate: step 2/4. Catalyzes the isomerization between 2-isopropylmalate and 3-isopropylmalate, via the formation of 2-isopropylmaleate. This Aliivibrio salmonicida (strain LFI1238) (Vibrio salmonicida (strain LFI1238)) protein is 3-isopropylmalate dehydratase large subunit.